The sequence spans 86 residues: uncharacterized protein (86 aa).

This is an uncharacterized protein from Vaccinia virus (strain Copenhagen) (VACV).